We begin with the raw amino-acid sequence, 222 residues long: Vesicle-associated membrane protein 724 (222 aa).

At Met-1 to Leu-197 the chain is on the cytoplasmic side. The Longin domain maps to Phe-10–Met-115. Residues Lys-131–Gln-191 form the v-SNARE coiled-coil homology domain. The helical; Anchor for type IV membrane protein transmembrane segment at Val-198 to Phe-218 threads the bilayer. The Vesicular portion of the chain corresponds to Asn-219–Asp-222.

This sequence belongs to the synaptobrevin family. As to expression, expressed in flowers, leaves, stems and roots.

Its subcellular location is the cell membrane. It is found in the early endosome membrane. In terms of biological role, involved in the targeting and/or fusion of transport vesicles to their target membrane. In Arabidopsis thaliana (Mouse-ear cress), this protein is Vesicle-associated membrane protein 724.